The following is a 64-amino-acid chain: uncharacterized protein (64 aa).

This is an uncharacterized protein from Bacillus subtilis (strain 168).